The following is a 269-amino-acid chain: Tryptophan synthase alpha chain (269 aa).

Residues Glu-49 and Asp-60 each act as proton acceptor in the active site.

Belongs to the TrpA family. In terms of assembly, tetramer of two alpha and two beta chains.

It catalyses the reaction (1S,2R)-1-C-(indol-3-yl)glycerol 3-phosphate + L-serine = D-glyceraldehyde 3-phosphate + L-tryptophan + H2O. It functions in the pathway amino-acid biosynthesis; L-tryptophan biosynthesis; L-tryptophan from chorismate: step 5/5. Functionally, the alpha subunit is responsible for the aldol cleavage of indoleglycerol phosphate to indole and glyceraldehyde 3-phosphate. The polypeptide is Tryptophan synthase alpha chain (Proteus mirabilis (strain HI4320)).